The sequence spans 1812 residues: Sperm flagellar protein 2 (1812 aa).

Residues 1–105 enclose the Calponin-homology (CH) domain; the sequence is MSEILCHWLN…LLYQLYIALQ (105 aa). Coiled-coil stretches lie at residues 178–260 and 374–403; these read LENF…KDLQ and EERRLKDFQDALDREAALAKQAKIDYEEQA. Positions 618-630 are enriched in basic and acidic residues; it reads EEKASPVRQESGD. A disordered region spans residues 618–658; sequence EEKASPVRQESGDRSQNLHNVLSAEGTPETEDETRLSTKKT. 3 coiled-coil regions span residues 724–750, 803–827, and 868–897; these read LNQAKLLEEALTGFNRNLIELEGKKSQ, ENINQRVAAENQDMDEDQNLRDQIQ, and KEMFMAEIMKKENKAKKKSEEKEAEKKEEF. Residues 879–897 are compositionally biased toward basic and acidic residues; it reads ENKAKKKSEEKEAEKKEEF. Disordered regions lie at residues 879–1002, 1272–1322, and 1793–1812; these read ENKA…KPGS, EEKE…APVI, and EHIQGSDGESSPSRLTEEKK. The segment covering 902–913 has biased composition (pro residues); it reads ATPPTPPAPPPS. Basic and acidic residues-rich tracts occupy residues 914 to 929, 943 to 961, and 1272 to 1285; these read EPEKEKEAHPPHERSK, HGNRESPQEGKGKKSETSP, and EEKENQPADTKEKP. The span at 1292-1310 shows a compositional bias: basic residues; the sequence is KKVKKEPPKKKREDKKGKG. The interval 1317-1669 is interaction with IFT20; that stretch reads ESAPVITVEE…AEKTSSFIDM (353 aa).

In terms of assembly, interacts (via C-terminus) with IFT20. Interacts with DYNC1I2. Predominantly expressed in ciliated tissues. Mainly expressed in testis, followed by trachea. Also expressed at lower level in lung, kidney and liver.

The protein resides in the cell projection. The protein localises to the cilium. Its subcellular location is the flagellum. It is found in the cytoplasm. It localises to the golgi apparatus. Required for correct axoneme development in spermatozoa. Important for normal development of the manchette and sperm head morphology. Essential for male fertility. Plays a role in localization of the intraflagellar transport protein IFT20 to the manchette, suggesting function as an adapter for dynein-mediated protein transport during spermatogenesis. Also plays a role in bone growth where it seems to be required for normal osteoblast differentiation. This chain is Sperm flagellar protein 2 (SPEF2), found in Sus scrofa (Pig).